A 142-amino-acid chain; its full sequence is Large ribosomal subunit protein mL42 (142 aa).

The transit peptide at 1–32 (MAVAAVKWVMSKRTILKHLFPVQNGALYCVCH) directs the protein to the mitochondrion.

This sequence belongs to the mitochondrion-specific ribosomal protein mL42 family. As to quaternary structure, component of the mitochondrial large ribosomal subunit (mt-LSU). Mature mammalian 55S mitochondrial ribosomes consist of a small (28S) and a large (39S) subunit. The 28S small subunit contains a 12S ribosomal RNA (12S mt-rRNA) and 30 different proteins. The 39S large subunit contains a 16S rRNA (16S mt-rRNA), a copy of mitochondrial valine transfer RNA (mt-tRNA(Val)), which plays an integral structural role, and 52 different proteins.

The protein resides in the mitochondrion. This chain is Large ribosomal subunit protein mL42 (MRPL42), found in Homo sapiens (Human).